Reading from the N-terminus, the 332-residue chain is Phosphoribosylformylglycinamidine cyclo-ligase (332 aa).

The protein belongs to the AIR synthase family.

The protein resides in the cytoplasm. It catalyses the reaction 2-formamido-N(1)-(5-O-phospho-beta-D-ribosyl)acetamidine + ATP = 5-amino-1-(5-phospho-beta-D-ribosyl)imidazole + ADP + phosphate + H(+). The protein operates within purine metabolism; IMP biosynthesis via de novo pathway; 5-amino-1-(5-phospho-D-ribosyl)imidazole from N(2)-formyl-N(1)-(5-phospho-D-ribosyl)glycinamide: step 2/2. The polypeptide is Phosphoribosylformylglycinamidine cyclo-ligase (Clostridium acetobutylicum (strain ATCC 824 / DSM 792 / JCM 1419 / IAM 19013 / LMG 5710 / NBRC 13948 / NRRL B-527 / VKM B-1787 / 2291 / W)).